Here is a 419-residue protein sequence, read N- to C-terminus: tRNA(Ile)-lysidine synthase (419 aa).

25–30 (SGGIDS) provides a ligand contact to ATP.

Belongs to the tRNA(Ile)-lysidine synthase family.

The protein localises to the cytoplasm. It carries out the reaction cytidine(34) in tRNA(Ile2) + L-lysine + ATP = lysidine(34) in tRNA(Ile2) + AMP + diphosphate + H(+). Ligates lysine onto the cytidine present at position 34 of the AUA codon-specific tRNA(Ile) that contains the anticodon CAU, in an ATP-dependent manner. Cytidine is converted to lysidine, thus changing the amino acid specificity of the tRNA from methionine to isoleucine. In Actinobacillus pleuropneumoniae serotype 7 (strain AP76), this protein is tRNA(Ile)-lysidine synthase.